A 648-amino-acid chain; its full sequence is Chaperone protein DnaK (648 aa).

Threonine 200 carries the phosphothreonine; by autocatalysis modification. The interval 612–631 (QAGAAGAAGAAEGAAQGGAQ) is disordered.

The protein belongs to the heat shock protein 70 family.

Functionally, acts as a chaperone. This chain is Chaperone protein DnaK, found in Burkholderia multivorans (strain ATCC 17616 / 249).